A 234-amino-acid chain; its full sequence is Ribonuclease HII (234 aa).

Positions 16 to 207 (ALVAGVDEAG…VRRMLTPKAI (192 aa)) constitute an RNase H type-2 domain. A divalent metal cation is bound by residues Asp-22, Glu-23, and Asp-115.

This sequence belongs to the RNase HII family. It depends on Mn(2+) as a cofactor. Mg(2+) is required as a cofactor.

It is found in the cytoplasm. It carries out the reaction Endonucleolytic cleavage to 5'-phosphomonoester.. Functionally, endonuclease that specifically degrades the RNA of RNA-DNA hybrids. This is Ribonuclease HII from Xylella fastidiosa (strain M12).